A 239-amino-acid chain; its full sequence is Ankyrin repeat domain-containing protein 49 (239 aa).

A Phosphoserine modification is found at Ser-49. ANK repeat units follow at residues 73 to 103, 107 to 136, 140 to 169, and 173 to 206; these read DPSRLLLWAAEKNRLTTVRRLLSEKATHVNT, DEYTPLHRAAYSGHLDIVQELIAQGADVHA, DGWTPLHSACKWNNTRVASFLLQHDADINA, and GLLTPLHLAAGNRDSKDTLELLLMNRYVKPGLKN.

Widely expressed in fetus, at a high level in fetal liver, brain and lung.

It localises to the nucleus. Induces HBG1 expression. May have a role in spermatogenesis where it promotes autophagy in response to serum starvation, via the NF-kappaB pathway. The chain is Ankyrin repeat domain-containing protein 49 (ANKRD49) from Homo sapiens (Human).